The primary structure comprises 35 residues: Photosystem II reaction center protein M (35 aa).

Residues 5-25 form a helical membrane-spanning segment; the sequence is ILAFIATALFILVPTAFLLII.

The protein belongs to the PsbM family. In terms of assembly, PSII is composed of 1 copy each of membrane proteins PsbA, PsbB, PsbC, PsbD, PsbE, PsbF, PsbH, PsbI, PsbJ, PsbK, PsbL, PsbM, PsbT, PsbX, PsbY, PsbZ, Psb30/Ycf12, at least 3 peripheral proteins of the oxygen-evolving complex and a large number of cofactors. It forms dimeric complexes.

It localises to the plastid. The protein localises to the chloroplast thylakoid membrane. One of the components of the core complex of photosystem II (PSII). PSII is a light-driven water:plastoquinone oxidoreductase that uses light energy to abstract electrons from H(2)O, generating O(2) and a proton gradient subsequently used for ATP formation. It consists of a core antenna complex that captures photons, and an electron transfer chain that converts photonic excitation into a charge separation. This subunit is found at the monomer-monomer interface. The protein is Photosystem II reaction center protein M of Amborella trichopoda.